Reading from the N-terminus, the 99-residue chain is NADH-quinone oxidoreductase subunit K (99 aa).

The next 3 membrane-spanning stretches (helical) occupy residues 3-23 (PENY…GVLI), 28-48 (IIVF…FVTF), and 59-79 (VFAF…LAII).

This sequence belongs to the complex I subunit 4L family. As to quaternary structure, NDH-1 is composed of 14 different subunits. Subunits NuoA, H, J, K, L, M, N constitute the membrane sector of the complex.

The protein resides in the cell membrane. It carries out the reaction a quinone + NADH + 5 H(+)(in) = a quinol + NAD(+) + 4 H(+)(out). Functionally, NDH-1 shuttles electrons from NADH, via FMN and iron-sulfur (Fe-S) centers, to quinones in the respiratory chain. The immediate electron acceptor for the enzyme in this species is believed to be a menaquinone. Couples the redox reaction to proton translocation (for every two electrons transferred, four hydrogen ions are translocated across the cytoplasmic membrane), and thus conserves the redox energy in a proton gradient. This Rhodococcus jostii (strain RHA1) protein is NADH-quinone oxidoreductase subunit K.